The primary structure comprises 2344 residues: MAAMSRLTGMTTAILPEKKPLSFFLDLRDKTPPCCIRATGRLAWPVFPGQNGKEGPLETCNMCGKWLNGFGNFGLEDLGDVCLRSIAQQKHKFGPVCLCNRVYLHDCGRWRRRSRFLKHYKALNKVIPCAYQFVESFPTPIFEGEVDDLFVELGAPTSMGFMDKKLLKKGKKLMDKFVDVDEPCLTSRDASLLDSIASDNTIRAKLEEEYGVEMVQAARDRKDFMKNLRLALDNWPANPVTWYRKLGNITKKGKQWAKKVVYGARKVTDPLKTLASILLVGLHNVIAVDTTVMLSTFNPVNLLAILMDWNNDLTGFFATLVRLLELYGVVQATVNLIIEGVKSFWDKVVCATDRCFDLLKRLFDTFEDSVPTGPTAGCLIFMAFVFSTVVGYLPNNSVITTFMKGAGKLTTFAGVVGAIRTLWITINQHMVAKDLTSVQQKVMTVVKMANEAATLDQLEIVSCLCSDLETTLTNRCTLPSYNQHLGILNASQKVISDLHTMVLGKINTSKQRPQPVAVIFKGAPGIGKTYLVHRIARDLGCQHPSTINFGLDHFDSYTGEEVAIADESNTCGDGESWVELFIQMVNTNPCPLNCDKAENKNKVFNSKYLLCTTNSNMILNATHPRAGAFYRRVMIVEARNKAVESWQATRHGSKPGKSCYNKDMSHLTFQVYPHNMPAPGFVFVGDKLVKSQVTPREYKYSELLDLIKSEHPDVASFEGANKFNFVYPDAQYDQALLMWKQYFVMYGCVARLAKNFVDDIPYNQVHISRASDPKIEGCVEYQCKFQHLWRMVPQFVLGCVNMTNQLGTPLTQQQLDRITNGVEGVTVTTVNNILPFHSQTTLINPSFIKLIWAVRKHLKGLSGVTKVAQFIWRVMTNPVDAYGTLVRTLTGAATFSDDPVSTTIICSNCTIQLHSCGGLLVRYSRDPVPVASDNVDRGDQGVDVFTDPNLISGFSWRQIAHLFVEVISHLCANHLVNLATMAALGAVATKAFQGVKGKTKRGRGARVNLGNDEYDEWQAARREFVNAHDMTAEEYLAMKNKAAMGSDDQDSIMFRSWWTRRQLRPDEDQVTIVGRSGVRNEVIRTRVRQTPRGPKTLDDGGFYDNDYEGLPGFMRHNGSGRMIHIGNGLYISNTHTARSSCSEIVTCSPTTDLCLVKGEAIRSVAQIAEGTPVCDWKKSPISTYGIKKTLSDSTKIDVLAYDGCTQTTHGDCGLPLYDSSGKIVAIHTGKLLGFSKMCTLIDLTITKGVYETSNFFCGEPIDYRGITAHRLVGAEPRPPVSGTRYAKVPGVPDEYKTGYRPANLGRSDPDSDKSLMNIAVKNLQVYQQEPKLDKVDEFIERAAADVLGYLRFLTKGERQANLNFKAAFNTLDLSTSCGPFAPGKKIDHVKDGVMDQVLAKHLYKCWSVANSGKALHHIYACGLKDELRPLDKVKEGKKRLLWGCDVGVAVCAAAVFHNICYELKMVARFGPIAVGVDMTSRDVDVIINNLTSKASDFLCLDYSKWDSTMSPCVVRLAIDILADCCEQTELTKSVVLTLKSHPMTILDAMIVQTKRGLPSGMPFTSVINSICHWLLWSAAVYKSCAEIGLHCSNLYEDAPFYTYGDDGVYAMTPMMVSLLPAIIENLRDYGLSPTAADKTEFIDVCPLNKISFLKRTFELTDIGWVSKLDKSSILRQLEWSKTTSRHMVIEETYDLAKEERGVQLEELQVAAAAHGQEFFNFVCGELVRQQAYTQFSVYSYDAARKILADRKRVVSVVPDDEFVNVMEGKARAAPQGEAARTATTASVPGTTTDGMDPGVVATTSVITAENSSASIATAGIGGPPQQVDQQETWRTNFYYNDVFTWSVADAPGSILYTVQHSPQNNPFTAVLSQMYAGWAGGMQFRFIVAGSGVFGGRLVRAVIPPGIEIGPGLEVRQFPHVVIDARSLEPVTITMPDLRPNMYHPTGDPGLVPTLVLSVYNNLINPFGGSTSAIQVTVETRPSEDFEFVMIRAPSSKTVDSISPAGLLTTPDLTGVGNDNRWNGQIVGLQPVPGGFSTCNRHWNLNGSTYGWSSPRFADIDHRKGSASYPGSNATNVLQFWYANAGSAIDNPISQVAPDGLPDMSFVPFNGPGIPAAGWVGFGAIWNSNSGAPNVTTVQAYELGFATGAPGNLQPTTNTSGAQTVAKSIYAVVTGTAQNPAGLFVMASGIISTPNASAITYTPQPDRIVTTPGTPAAAPVGKNTPIMFASVVRRTGDVNATAGSANGTQYGTGSQPLPVTIGLSLNNYSSALMPGQFFVWQLTFASGFMEIGLSVDGYFYAGTGASTTLIDLTELIDVRPVGPRPSKSTLVFNLGGTANGFSYV.

Residues 492–653 (QKVISDLHTM…ESWQATRHGS (162 aa)) enclose the SF3 helicase domain. 522–529 (GAPGIGKT) is a binding site for ATP. O-(5'-phospho-RNA)-tyrosine is present on Tyr-1014. Tyr-1014 is modified (O-UMP-tyrosine; transient). Residues 1109–1244 (GLPGFMRHNG…SKMCTLIDLT (136 aa)) form the Peptidase C24 domain. Catalysis depends on for 3CLpro activity residues His-1135, Asp-1152, and Cys-1212. In terms of domain architecture, RdRp catalytic spans 1495–1619 (SDFLCLDYSK…AMTPMMVSLL (125 aa)). A disulfide bond links Cys-1584 and Cys-1591. Residues 1774-1796 (PQGEAARTATTASVPGTTTDGMD) are disordered. Positions 1781-1792 (TATTASVPGTTT) are enriched in low complexity.

In terms of assembly, homodimer. Homomultimer. Interacts with host type II histo-blood group structures antigens at the surface of target cells. Mn(2+) serves as cofactor. In terms of processing, specific enzymatic cleavages by its own cysteine protease yield mature proteins. The protease cleaves itself from the nascent polyprotein autocatalytically. Precursor p41 can be cleaved by viral 3CLpro into protein p19 and VPg, or cleaved by host protease into protein p23/2 and protein p18. Post-translationally, VPg is uridylylated by the polymerase and is covalently attached to the 5'-end of the polyadenylated genomic and subgenomic RNAs. This uridylylated form acts as a nucleotide-peptide primer for the polymerase.

It is found in the host cytoplasm. Its subcellular location is the host endoplasmic reticulum. It localises to the virion. It catalyses the reaction a ribonucleoside 5'-triphosphate + H2O = a ribonucleoside 5'-diphosphate + phosphate + H(+). The catalysed reaction is Endopeptidase with a preference for cleavage when the P1 position is occupied by Glu-|-Xaa and the P1' position is occupied by Gly-|-Yaa.. It carries out the reaction RNA(n) + a ribonucleoside 5'-triphosphate = RNA(n+1) + diphosphate. In terms of biological role, together with NTPase and NS4, initiates the formation of the replication complex. Induces the proliferation of the host smooth ER membranes forming long tubular structures. These remodeled membranes probably form the viral factories that contain the replication complex. Functionally, displays NTPase activity, but no helicase activity. Induces the formation of convoluted membranes derived from the host ER. These remodeled membranes probably form the viral factories that contain the replication complex. Together with NS2 and NS4, initiates the formation of the replication complex. Probable key protein responsible for the formation of membrane alterations by the virus. Induces the formation of convoluted membranes derived from the host ER. These remodeled membranes probably form the viral factories that contain the replication complex. Together with NS2 and NTPase, initiates the formation of the replication complex. Its function is as follows. Viral genome-linked protein is covalently linked to the 5'-end of the positive-strand, negative-strand genomic RNAs and subgenomic RNA. Acts as a genome-linked replication primer. May recruit ribosome to viral RNA thereby promoting viral proteins translation. Interacts with host translation initiation complex to allow the translation of viral proteins. In terms of biological role, processes the polyprotein. 3CLpro-RdRp is first released by autocleavage, then all other proteins are cleaved. May cleave polyadenylate-binding protein thereby inhibiting cellular translation. Functionally, replicates genomic and antigenomic RNA by recognizing replications specific signals. Also transcribes a subgenomic mRNA by initiating RNA synthesis internally on antigenomic RNA. This sgRNA codes for structural proteins. Catalyzes the covalent attachment VPg with viral RNAs. Capsid protein VP60 self assembles to form an icosahedral capsid with a T=3 symmetry, about 35 nm in diameter, and consisting of 180 capsid proteins. A smaller form of capsid with a diameter of 23 nm might be capsid proteins assembled as icosahedron with T=1 symmetry. The capsid encapsulate VP2 proteins and genomic or subgenomic RNA. Attaches virion to target cells by binding histo-blood group antigens, inducing endocytosis of the viral particle. Acidification of the endosome induces conformational change of capsid protein thereby injecting virus genomic RNA into host cytoplasm. The protein is Genome polyprotein of Oryctolagus cuniculus (Rabbit).